The sequence spans 258 residues: Imidazole glycerol phosphate synthase subunit HisF (258 aa).

Active-site residues include Asp-11 and Asp-130.

The protein belongs to the HisA/HisF family. As to quaternary structure, heterodimer of HisH and HisF.

Its subcellular location is the cytoplasm. The catalysed reaction is 5-[(5-phospho-1-deoxy-D-ribulos-1-ylimino)methylamino]-1-(5-phospho-beta-D-ribosyl)imidazole-4-carboxamide + L-glutamine = D-erythro-1-(imidazol-4-yl)glycerol 3-phosphate + 5-amino-1-(5-phospho-beta-D-ribosyl)imidazole-4-carboxamide + L-glutamate + H(+). The protein operates within amino-acid biosynthesis; L-histidine biosynthesis; L-histidine from 5-phospho-alpha-D-ribose 1-diphosphate: step 5/9. IGPS catalyzes the conversion of PRFAR and glutamine to IGP, AICAR and glutamate. The HisF subunit catalyzes the cyclization activity that produces IGP and AICAR from PRFAR using the ammonia provided by the HisH subunit. The protein is Imidazole glycerol phosphate synthase subunit HisF of Bradyrhizobium sp. (strain BTAi1 / ATCC BAA-1182).